The sequence spans 230 residues: UPF0173 metal-dependent hydrolase Sca_1312 (230 aa).

It belongs to the UPF0173 family.

This Staphylococcus carnosus (strain TM300) protein is UPF0173 metal-dependent hydrolase Sca_1312.